The following is a 206-amino-acid chain: Protein Nef (206 aa).

G2 is lipidated: N-myristoyl glycine; by host. S6 carries the post-translational modification Phosphoserine; by host. The acidic; interacts with host PACS1 and PACS2; stabilizes the interaction of NEF/MHC-I with host AP1M1; necessary for MHC-I internalization stretch occupies residues 62–65 (EEEE). The SH3-binding; interaction with Src family tyrosine kinases stretch occupies residues 69 to 78 (PVTPQVPLRP). The PxxP; stabilizes the interaction of NEF/MHC-I with host AP1M1; necessary for MHC-I internalization motif lies at 72-75 (PQVP). The interval 108–124 (DILDLWIYHTQGYFPDW) is mediates dimerization, Nef-PTE1 interaction. Residues 148–180 (VEPEKLEEANKGENTSLLHPVSLHGMDDPEREV) form a binding to ATP6V1H region. The short motif at 164–165 (LL) is the Dileucine internalization motif; necessary for CD4 internalization element. A Diacidic; necessary for CD4 internalization motif is present at residues 174–175 (DD).

Belongs to the lentivirus primate group Nef protein family. As to quaternary structure, monomer; cytosolic form. Homodimer; membrane bound form. Interacts with Nef associated p21-activated kinase (PAK2); this interaction activates PAK2. Associates with the Nef-MHC-I-AP1 complex; this complex is required for MHC-I internalization. Interacts (via C-terminus) with host PI3-kinase. Interacts with host PACS1; this interaction seems to be weak. Interacts with host PACS2. Interacts with host LCK and MAPK3; these interactions inhibit the kinase activity of the latter. Interacts with host ATP6V1H; this interaction may play a role in CD4 endocytosis. Associates with the CD4-Nef-AP2 complex; this complex is required for CD4 internalization. Interacts with host AP2 subunit alpha and AP2 subunit sigma2. Interacts with TCR-zeta chain; this interaction up-regulates the Fas ligand (FasL) surface expression. Interacts with host HCK, LYN, and SRC; these interactions activate the Src family kinases. Interacts with MAP3K5; this interaction inhibits the Fas and TNFR-mediated death signals. Interacts with beta-COP and PTE1. Interacts with human RACK1; this increases Nef phosphorylation by PKC. Interacts with TP53; this interaction decreases the half-life of TP53, protecting the infected cell against p53-mediated apoptosis. Post-translationally, the virion-associated Nef proteins are cleaved by the viral protease to release the soluble C-terminal core protein. Nef is probably cleaved concomitantly with viral structural proteins on maturation of virus particles. In terms of processing, myristoylated. Phosphorylated on serine residues, probably by host PKCdelta and theta.

It is found in the host cell membrane. The protein resides in the virion. It localises to the secreted. Its subcellular location is the host Golgi apparatus membrane. Its function is as follows. Factor of infectivity and pathogenicity, required for optimal virus replication. Alters numerous pathways of T-lymphocyte function and down-regulates immunity surface molecules in order to evade host defense and increase viral infectivity. Alters the functionality of other immunity cells, like dendritic cells, monocytes/macrophages and NK cells. In infected CD4(+) T-lymphocytes, down-regulates the surface MHC-I, mature MHC-II, CD4, CD28, CCR5 and CXCR4 molecules. Mediates internalization and degradation of host CD4 through the interaction of with the cytoplasmic tail of CD4, the recruitment of AP-2 (clathrin adapter protein complex 2), internalization through clathrin coated pits, and subsequent transport to endosomes and lysosomes for degradation. Diverts host MHC-I molecules to the trans-Golgi network-associated endosomal compartments by an endocytic pathway to finally target them for degradation. MHC-I down-regulation may involve AP-1 (clathrin adapter protein complex 1) or possibly Src family kinase-ZAP70/Syk-PI3K cascade recruited by PACS2. In consequence infected cells are masked for immune recognition by cytotoxic T-lymphocytes. Decreasing the number of immune receptors also prevents reinfection by more HIV particles (superinfection). Down-regulates host SERINC3 and SERINC5 thereby excluding these proteins from the viral particles. Virion infectivity is drastically higher when SERINC3 or SERINC5 are excluded from the viral envelope, because these host antiviral proteins impair the membrane fusion event necessary for subsequent virion penetration. In terms of biological role, bypasses host T-cell signaling by inducing a transcriptional program nearly identical to that of anti-CD3 cell activation. Interaction with TCR-zeta chain up-regulates the Fas ligand (FasL). Increasing surface FasL molecules and decreasing surface MHC-I molecules on infected CD4(+) cells send attacking cytotoxic CD8+ T-lymphocytes into apoptosis. Functionally, plays a role in optimizing the host cell environment for viral replication without causing cell death by apoptosis. Protects the infected cells from apoptosis in order to keep them alive until the next virus generation is ready to strike. Inhibits the Fas and TNFR-mediated death signals by blocking MAP3K5/ASK1. Decreases the half-life of TP53, protecting the infected cell against p53-mediated apoptosis. Inhibits the apoptotic signals regulated by the Bcl-2 family proteins through the formation of a Nef/PI3-kinase/PAK2 complex that leads to activation of PAK2 and induces phosphorylation of host BAD. Its function is as follows. Extracellular Nef protein targets CD4(+) T-lymphocytes for apoptosis by interacting with CXCR4 surface receptors. The chain is Protein Nef from Human immunodeficiency virus type 1 group M subtype B (isolate LW123) (HIV-1).